Here is a 273-residue protein sequence, read N- to C-terminus: Undecaprenyl-diphosphatase (273 aa).

7 helical membrane-spanning segments follow: residues 39-59, 86-106, 117-137, 146-166, 189-209, 220-240, and 249-269; these read SGLT…VVYF, LPFL…LFET, LLIG…DLFG, VTVS…IPGV, FSFL…MLHL, LPLA…VAFL, and IAPF…VILT.

This sequence belongs to the UppP family.

The protein localises to the cell inner membrane. The catalysed reaction is di-trans,octa-cis-undecaprenyl diphosphate + H2O = di-trans,octa-cis-undecaprenyl phosphate + phosphate + H(+). Functionally, catalyzes the dephosphorylation of undecaprenyl diphosphate (UPP). Confers resistance to bacitracin. The sequence is that of Undecaprenyl-diphosphatase from Pelobacter propionicus (strain DSM 2379 / NBRC 103807 / OttBd1).